The primary structure comprises 261 residues: Vacuolar iron transporter (261 aa).

Residues 66-86 (GQVLIAALAALFAGALSMAVG) form a helical membrane-spanning segment. Residues Glu-105, Glu-108, Glu-116, Glu-119, and Glu-154 each coordinate Fe cation. The next 3 helical transmembrane spans lie at 170-190 (MVSF…GAWI), 197-217 (IGAI…VGAF), and 233-253 (GGAL…TLNI).

The protein belongs to the CCC1 family.

Its subcellular location is the vacuole membrane. The enzyme catalyses Fe(2+)(in) = Fe(2+)(out). In terms of biological role, vacuolar iron transporter involved in the transfer of iron ions from the cytosol to the vacuole for intracellular iron storage. In Acanthamoeba castellanii (strain ATCC 30010 / Neff), this protein is Vacuolar iron transporter.